A 174-amino-acid chain; its full sequence is Small ribosomal subunit protein uS5 (174 aa).

The S5 DRBM domain maps to 18 to 81 (LKDRLVSVNR…EDAKKNLVKI (64 aa)).

The protein belongs to the universal ribosomal protein uS5 family. Part of the 30S ribosomal subunit. Contacts proteins S4 and S8.

With S4 and S12 plays an important role in translational accuracy. Its function is as follows. Located at the back of the 30S subunit body where it stabilizes the conformation of the head with respect to the body. The polypeptide is Small ribosomal subunit protein uS5 (Flavobacterium psychrophilum (strain ATCC 49511 / DSM 21280 / CIP 103535 / JIP02/86)).